The primary structure comprises 60 residues: VEQLQRLKSEFGASRYLTEARRQALAQELRLNEAQIKIWFQNKRAKLKKANGLRNPLALH.

Positions Val1–Gln41 form a DNA-binding region, homeobox.

It belongs to the engrailed homeobox family.

It localises to the nucleus. The polypeptide is Homeobox protein engrailed-like B (Myxine glutinosa (Atlantic hagfish)).